The primary structure comprises 227 residues: Germin-like protein subfamily 3 member 2 (227 aa).

Positions 1–24 are cleaved as a signal peptide; it reads MEANTLFLLKALCLLCFNVCFTLA. Cys-34 and Cys-54 are oxidised to a cystine. Asn-56 and Asn-75 each carry an N-linked (GlcNAc...) asparagine glycan. The Cupin type-1 domain occupies 68–213; sequence SGLKTAGNFT…AFGLSLKQIG (146 aa). Mn(2+) contacts are provided by His-115, His-117, Glu-122, and His-161.

This sequence belongs to the germin family. Oligomer (believed to be a pentamer but probably hexamer).

Its subcellular location is the secreted. It localises to the extracellular space. The protein localises to the apoplast. Its function is as follows. May play a role in plant defense. Probably has no oxalate oxidase activity even if the active site is conserved. The sequence is that of Germin-like protein subfamily 3 member 2 from Arabidopsis thaliana (Mouse-ear cress).